The chain runs to 244 residues: Putative B3 domain-containing protein At2g31460 (244 aa).

Residues serine 49–glycine 147 constitute a DNA-binding region (TF-B3). 2 disordered regions span residues aspartate 175–valine 196 and aspartate 217–glutamine 244. Residues glycine 235–glutamine 244 show a composition bias toward basic and acidic residues.

The protein localises to the nucleus. The polypeptide is Putative B3 domain-containing protein At2g31460 (Arabidopsis thaliana (Mouse-ear cress)).